The chain runs to 513 residues: MQLNSTEISELIKQRIAQFNVVSEAHNEGTIVSVSDGIIRIHGLAEVMQGEMIALPGNRFAIALNLERDSVGAVVMGPYADLAEGMKVKCTGRILEVPVGRGLLGRVVNTLGEPIDGKGAVEHDGFSPVEMIAPGVIDRQSVDQPVQTGYKSVDAMIPIGRGQRELIIGDRQTGKTALAVDAIINQRDSGIKCIYVAIGQKASTISNVVRKLEEHGALENTIVVVASASESAALQYLAPYAGCAMGEYFRDRGEDALIIYDDLSKQAVAYRQISLLLRRPPGREAYPGDVFYLHSRLLERAARVSAEYVENFTNGEVKGKTGSLTALPIIETQAGDVSAFVPTNVISITDGQIFLESNLFNAGIRPAVNPGISVSRVGGAAQTKIMKKLSGGIRTALAQYRELAAFSQFASDLDDATRKQLNHGQKVTELLKQKQYEPMSVAQQSLSLFAAERGYLEDVEISKVVPFEAALLAYASREHADLLKEINQTGTYNEEIEAKLKGVLDNFKATQSW.

ATP is bound at residue 169–176 (GDRQTGKT).

It belongs to the ATPase alpha/beta chains family. In terms of assembly, F-type ATPases have 2 components, CF(1) - the catalytic core - and CF(0) - the membrane proton channel. CF(1) has five subunits: alpha(3), beta(3), gamma(1), delta(1), epsilon(1). CF(0) has three main subunits: a(1), b(2) and c(9-12). The alpha and beta chains form an alternating ring which encloses part of the gamma chain. CF(1) is attached to CF(0) by a central stalk formed by the gamma and epsilon chains, while a peripheral stalk is formed by the delta and b chains.

It localises to the cell inner membrane. The enzyme catalyses ATP + H2O + 4 H(+)(in) = ADP + phosphate + 5 H(+)(out). Produces ATP from ADP in the presence of a proton gradient across the membrane. The alpha chain is a regulatory subunit. The chain is ATP synthase subunit alpha from Proteus mirabilis (strain HI4320).